A 155-amino-acid chain; its full sequence is MRKGSPKKRTLLPDPKYKDTLVTRFVNNLMKGGKKNLAYDIFYSAVDIVGDKTGESGLEVWKKALSNVFPSVEVKRRRVGGATLQVPIEVRPERRISLGIKWMLEQARLRGEKTMQERLAYEIIAASQGEGKSVKKKADMHKMAESNRAFSHFKI.

The protein belongs to the universal ribosomal protein uS7 family. Part of the 30S ribosomal subunit. Contacts proteins S9 and S11.

In terms of biological role, one of the primary rRNA binding proteins, it binds directly to 16S rRNA where it nucleates assembly of the head domain of the 30S subunit. Is located at the subunit interface close to the decoding center, probably blocks exit of the E-site tRNA. The sequence is that of Small ribosomal subunit protein uS7 from Amoebophilus asiaticus (strain 5a2).